The following is a 734-amino-acid chain: Threonine--tRNA ligase, cytoplasmic (734 aa).

The tract at residues 1–41 (MSASEAGVTEQVKKLSVKDSSNDAVKPNKKENKKSKQQSLY) is disordered. Over residues 11 to 30 (QVKKLSVKDSSNDAVKPNKK) the composition is skewed to basic and acidic residues. Residues 69-135 (SMPRVPLKIV…EGEANEEIKL (67 aa)) enclose the TGS domain. Phosphoserine is present on residues Ser195 and Ser289. Phosphothreonine is present on residues Thr297 and Thr381. 2 positions are modified to phosphoserine: Ser453 and Ser457. Thr460 carries the post-translational modification Phosphothreonine. Residue Ser605 is modified to Phosphoserine.

This sequence belongs to the class-II aminoacyl-tRNA synthetase family.

It localises to the cytoplasm. The catalysed reaction is tRNA(Thr) + L-threonine + ATP = L-threonyl-tRNA(Thr) + AMP + diphosphate + H(+). The protein is Threonine--tRNA ligase, cytoplasmic (THS1) of Saccharomyces cerevisiae (strain ATCC 204508 / S288c) (Baker's yeast).